Here is a 295-residue protein sequence, read N- to C-terminus: Protease HtpX (295 aa).

The next 2 helical transmembrane spans lie at 4-24 and 41-61; these read ILLF…TLSL and SSLL…SLFI. His-147 is a Zn(2+) binding site. The active site involves Glu-148. Zn(2+) is bound at residue His-151. A run of 2 helical transmembrane segments spans residues 158–178 and 199–219; these read VTLA…ARII and VATI…VMWF. Glu-224 provides a ligand contact to Zn(2+).

The protein belongs to the peptidase M48B family. It depends on Zn(2+) as a cofactor.

It localises to the cell inner membrane. The polypeptide is Protease HtpX (Pseudomonas putida (strain ATCC 700007 / DSM 6899 / JCM 31910 / BCRC 17059 / LMG 24140 / F1)).